A 1331-amino-acid polypeptide reads, in one-letter code: Xanthine dehydrogenase/oxidase (1331 aa).

A 2Fe-2S ferredoxin-type domain is found at 4–91 (DELVFFVNGK…HVAVTTVEGI (88 aa)). The [2Fe-2S] cluster site is built by Cys43, Cys48, Cys51, Cys73, Cys112, Cys115, Cys147, and Cys149. The FAD-binding PCMH-type domain maps to 228–413 (FEGERVTWIQ…LSIEIPYSKE (186 aa)). FAD is bound by residues 256-263 (LVVGNTEI), Phe336, 346-350 (SIGGN), Asp359, Leu403, and Lys421. Cys535 and Cys992 are oxidised to a cystine. Mo-molybdopterin is bound by residues Gln767 and Phe798. Substrate contacts are provided by Glu802 and Arg880. Residue Arg912 coordinates Mo-molybdopterin. Positions 914 and 1010 each coordinate substrate. Ala1079 contacts Mo-molybdopterin. Glu1261 acts as the Proton acceptor in catalysis.

This sequence belongs to the xanthine dehydrogenase family. Homodimer. Interacts with BTN1A1. [2Fe-2S] cluster is required as a cofactor. The cofactor is FAD. It depends on Mo-molybdopterin as a cofactor. Subject to partial proteolysis; this alters the enzyme from the dehydrogenase form (D) to the oxidase form (O). In terms of processing, contains sulfhydryl groups that are easily oxidized (in vitro); this alters the enzyme from the dehydrogenase form (D) to the oxidase form (O).

It localises to the peroxisome. It is found in the cytoplasm. The protein localises to the secreted. It catalyses the reaction xanthine + NAD(+) + H2O = urate + NADH + H(+). The enzyme catalyses hypoxanthine + NAD(+) + H2O = xanthine + NADH + H(+). The catalysed reaction is xanthine + O2 + H2O = urate + H2O2. Can be converted from the dehydrogenase form (D) to the oxidase form (O) irreversibly by proteolysis or reversibly through the oxidation of sulfhydryl groups. Key enzyme in purine degradation. Catalyzes the oxidation of hypoxanthine to xanthine. Catalyzes the oxidation of xanthine to uric acid. Contributes to the generation of reactive oxygen species. The sequence is that of Xanthine dehydrogenase/oxidase (Xdh) from Rattus norvegicus (Rat).